The primary structure comprises 172 residues: Acidic proline-rich protein PRP25 (172 aa).

Positions 1–16 are cleaved as a signal peptide; it reads MLVVLFTAVLLTLSYA. A disordered region spans residues 22–172; it reads ELQILDQTPN…QQGPPPPGGP (151 aa). The segment covering 32 to 44 has biased composition (pro residues); sequence QKPPPPGFPPRPP. The span at 57-67 shows a compositional bias: low complexity; that stretch reads GPQQSPLQPGK. Pro residues-rich tracts occupy residues 68 to 137 and 145 to 172; these read PQDP…PQQK and QGPPPPGGPQQKPPQPGNQQGPPPPGGP.

Its subcellular location is the secreted. This Rattus norvegicus (Rat) protein is Acidic proline-rich protein PRP25.